A 230-amino-acid polypeptide reads, in one-letter code: Large ribosomal subunit protein uL1 (230 aa).

This sequence belongs to the universal ribosomal protein uL1 family. In terms of assembly, part of the 50S ribosomal subunit.

In terms of biological role, binds directly to 23S rRNA. The L1 stalk is quite mobile in the ribosome, and is involved in E site tRNA release. Its function is as follows. Protein L1 is also a translational repressor protein, it controls the translation of the L11 operon by binding to its mRNA. The chain is Large ribosomal subunit protein uL1 from Erythrobacter litoralis (strain HTCC2594).